We begin with the raw amino-acid sequence, 306 residues long: MPIKIPDDLPATSVLEAEGVMVMREADAVRQDIRPLRIGLLNLMPNKVTTETQIARLLGATPLQVELTLVRMTNHVARHTPADHMLSFYCPWEEVNDQRFDGFVITGAPVERLPFEEVTYWDEMRRVFDWTQSHVHRTLNICWAAQAAVYHFHGMKKYDLPAKASGVFRQRSLVPASPYLRGFSDDFAIPVSRWTEVRKSDIPADSGLKVLVDSTETGLCLLDDPRHRSLHMFNHVEYDTTSLADEYFRDIQVQPEAKVPVNYFPGDDAKRPPENRWRSHAHLLFGNWINEMYQSTPYDIERIGKV.

The Acyl-thioester intermediate role is filled by Cys142. Lys163 and Ser192 together coordinate substrate. The Proton acceptor role is filled by His235. Glu237 is a catalytic residue. A substrate-binding site is contributed by Arg249.

Belongs to the MetA family.

The protein resides in the cytoplasm. The catalysed reaction is L-homoserine + acetyl-CoA = O-acetyl-L-homoserine + CoA. It functions in the pathway amino-acid biosynthesis; L-methionine biosynthesis via de novo pathway; O-acetyl-L-homoserine from L-homoserine: step 1/1. In terms of biological role, transfers an acetyl group from acetyl-CoA to L-homoserine, forming acetyl-L-homoserine. In Brucella abortus (strain S19), this protein is Homoserine O-acetyltransferase.